The sequence spans 241 residues: Chaperone protein FimC (241 aa).

The first 36 residues, 1 to 36, serve as a signal peptide directing secretion; sequence MSNKNVNVRKSQEITFCLLAGILMFMAMVVAGRAEA.

It belongs to the periplasmic pilus chaperone family.

The protein resides in the periplasm. Required for the biogenesis of type 1 fimbriae. Binds and interact with FimH. This chain is Chaperone protein FimC (fimC), found in Escherichia coli O6:H1 (strain CFT073 / ATCC 700928 / UPEC).